Here is a 211-residue protein sequence, read N- to C-terminus: Uracil phosphoribosyltransferase (211 aa).

5-phospho-alpha-D-ribose 1-diphosphate contacts are provided by residues R78, R103, and 130–138; that span reads DPMLATGSS. Uracil-binding positions include I193 and 198–200; that span reads GDA. D199 contacts 5-phospho-alpha-D-ribose 1-diphosphate.

The protein belongs to the UPRTase family. Mg(2+) serves as cofactor.

It carries out the reaction UMP + diphosphate = 5-phospho-alpha-D-ribose 1-diphosphate + uracil. The protein operates within pyrimidine metabolism; UMP biosynthesis via salvage pathway; UMP from uracil: step 1/1. Its activity is regulated as follows. Allosterically activated by GTP. Functionally, catalyzes the conversion of uracil and 5-phospho-alpha-D-ribose 1-diphosphate (PRPP) to UMP and diphosphate. The sequence is that of Uracil phosphoribosyltransferase from Acinetobacter baylyi (strain ATCC 33305 / BD413 / ADP1).